The primary structure comprises 471 residues: 3-isopropylmalate dehydratase large subunit (471 aa).

C349, C409, and C412 together coordinate [4Fe-4S] cluster.

The protein belongs to the aconitase/IPM isomerase family. LeuC type 1 subfamily. As to quaternary structure, heterodimer of LeuC and LeuD. [4Fe-4S] cluster is required as a cofactor.

The catalysed reaction is (2R,3S)-3-isopropylmalate = (2S)-2-isopropylmalate. The protein operates within amino-acid biosynthesis; L-leucine biosynthesis; L-leucine from 3-methyl-2-oxobutanoate: step 2/4. Functionally, catalyzes the isomerization between 2-isopropylmalate and 3-isopropylmalate, via the formation of 2-isopropylmaleate. The polypeptide is 3-isopropylmalate dehydratase large subunit (Aliivibrio salmonicida (strain LFI1238) (Vibrio salmonicida (strain LFI1238))).